We begin with the raw amino-acid sequence, 125 residues long: Ribonuclease P protein component (125 aa).

This sequence belongs to the RnpA family. As to quaternary structure, consists of a catalytic RNA component (M1 or rnpB) and a protein subunit.

It carries out the reaction Endonucleolytic cleavage of RNA, removing 5'-extranucleotides from tRNA precursor.. RNaseP catalyzes the removal of the 5'-leader sequence from pre-tRNA to produce the mature 5'-terminus. It can also cleave other RNA substrates such as 4.5S RNA. The protein component plays an auxiliary but essential role in vivo by binding to the 5'-leader sequence and broadening the substrate specificity of the ribozyme. This is Ribonuclease P protein component from Rhodococcus opacus (strain B4).